A 169-amino-acid chain; its full sequence is Ureidoglycolate lyase (169 aa).

This sequence belongs to the ureidoglycolate lyase family. As to quaternary structure, homodimer. It depends on Ni(2+) as a cofactor.

The enzyme catalyses (S)-ureidoglycolate = urea + glyoxylate. It functions in the pathway nitrogen metabolism; (S)-allantoin degradation. Catalyzes the catabolism of the allantoin degradation intermediate (S)-ureidoglycolate, generating urea and glyoxylate. Involved in the utilization of allantoin as nitrogen source. The sequence is that of Ureidoglycolate lyase from Brucella abortus biovar 1 (strain 9-941).